Here is a 395-residue protein sequence, read N- to C-terminus: Elongation factor Tu (395 aa).

The tr-type G domain occupies Lys-10 to Arg-205. The interval Gly-19–Thr-26 is G1. GTP is bound at residue Gly-19–Thr-26. Position 26 (Thr-26) interacts with Mg(2+). Positions Gly-60–Asn-64 are G2. The tract at residues Asp-81 to Gly-84 is G3. GTP is bound by residues Asp-81 to His-85 and Asn-136 to Asp-139. A G4 region spans residues Asn-136 to Asp-139. Residues Ser-174–Leu-176 form a G5 region.

The protein belongs to the TRAFAC class translation factor GTPase superfamily. Classic translation factor GTPase family. EF-Tu/EF-1A subfamily. As to quaternary structure, monomer.

It localises to the cytoplasm. It catalyses the reaction GTP + H2O = GDP + phosphate + H(+). In terms of biological role, GTP hydrolase that promotes the GTP-dependent binding of aminoacyl-tRNA to the A-site of ribosomes during protein biosynthesis. The protein is Elongation factor Tu of Cytophaga hutchinsonii (strain ATCC 33406 / DSM 1761 / CIP 103989 / NBRC 15051 / NCIMB 9469 / D465).